We begin with the raw amino-acid sequence, 166 residues long: Anterior gradient protein 3 (166 aa).

The N-terminal stretch at 1 to 21 is a signal peptide; that stretch reads MMLHSALGLCLLLVTVSSNLA. A Prevents secretion from ER motif is present at residues 163–166; the sequence is QSEL.

It belongs to the AGR family. As to quaternary structure, interacts with LYPD3 and DAG1 (alphaDAG1). Expressed in the lung, in the ciliated cells of the airway epithelium. Expression increased with differentiation of airway epithelial cells. Not detected in the mucous cells. Expressed in ciliated cells in the oviduct. Also detected in stomach, colon, prostate and liver. Expressed in breast, ovary, prostate and liver cancer. Expression is associated with the level of differentiation of breast cancer (at protein level).

The protein localises to the endoplasmic reticulum. In terms of biological role, required for calcium-mediated regulation of ciliary beat frequency and mucociliary clearance in the airway. Might be involved in the regulation of intracellular calcium in tracheal epithelial cells. This chain is Anterior gradient protein 3 (AGR3), found in Homo sapiens (Human).